The sequence spans 270 residues: MPELPEVETTRRGIAPYLEGQRVERVIVRERRLRWPIPEDLDVRLSGQRIVSVERRAKYLLLGAEAGTLISHLGMSGSLRLVESGTPASRHEHVDIELASGMSLRYTDPRRFGAMLWSLAPLEHELLRNLGPEPLTDAFAGQRLFELSRGRSMAVKPFIMDNAVVVGVGNIYASEALFAAGIDPRKPAGSISKARYLRLAEEIKRILAIAIERGGTTLRDFVGGDGQPGYFQQELFVYGRGGEFCKVCGSTLREIRLGQRASVYCPRCQR.

Pro-2 (schiff-base intermediate with DNA) is an active-site residue. Glu-3 serves as the catalytic Proton donor. The Proton donor; for beta-elimination activity role is filled by Lys-58. DNA-binding residues include His-91, Arg-110, and Arg-151. The FPG-type zinc finger occupies 236–270; the sequence is FVYGRGGEFCKVCGSTLREIRLGQRASVYCPRCQR. Arg-260 acts as the Proton donor; for delta-elimination activity in catalysis.

It belongs to the FPG family. In terms of assembly, monomer. Requires Zn(2+) as cofactor.

It catalyses the reaction Hydrolysis of DNA containing ring-opened 7-methylguanine residues, releasing 2,6-diamino-4-hydroxy-5-(N-methyl)formamidopyrimidine.. It carries out the reaction 2'-deoxyribonucleotide-(2'-deoxyribose 5'-phosphate)-2'-deoxyribonucleotide-DNA = a 3'-end 2'-deoxyribonucleotide-(2,3-dehydro-2,3-deoxyribose 5'-phosphate)-DNA + a 5'-end 5'-phospho-2'-deoxyribonucleoside-DNA + H(+). In terms of biological role, involved in base excision repair of DNA damaged by oxidation or by mutagenic agents. Acts as a DNA glycosylase that recognizes and removes damaged bases. Has a preference for oxidized purines, such as 7,8-dihydro-8-oxoguanine (8-oxoG). Has AP (apurinic/apyrimidinic) lyase activity and introduces nicks in the DNA strand. Cleaves the DNA backbone by beta-delta elimination to generate a single-strand break at the site of the removed base with both 3'- and 5'-phosphates. The chain is Formamidopyrimidine-DNA glycosylase from Pseudomonas paraeruginosa (strain DSM 24068 / PA7) (Pseudomonas aeruginosa (strain PA7)).